A 232-amino-acid chain; its full sequence is Y-linked testis-specific protein 1 (232 aa).

The protein belongs to the SPIN/STSY family. In terms of tissue distribution, expressed in testis (at protein level).

The sequence is that of Y-linked testis-specific protein 1 (Ssty1) from Mus musculus (Mouse).